The chain runs to 525 residues: tRNA(Ile)-lysidine synthase (525 aa).

Residue 32 to 37 (SGGRDS) coordinates ATP.

Belongs to the tRNA(Ile)-lysidine synthase family.

Its subcellular location is the cytoplasm. It catalyses the reaction cytidine(34) in tRNA(Ile2) + L-lysine + ATP = lysidine(34) in tRNA(Ile2) + AMP + diphosphate + H(+). Ligates lysine onto the cytidine present at position 34 of the AUA codon-specific tRNA(Ile) that contains the anticodon CAU, in an ATP-dependent manner. Cytidine is converted to lysidine, thus changing the amino acid specificity of the tRNA from methionine to isoleucine. In Psychrobacter sp. (strain PRwf-1), this protein is tRNA(Ile)-lysidine synthase.